Consider the following 116-residue polypeptide: Ribosome-binding factor A (116 aa).

The protein belongs to the RbfA family. As to quaternary structure, monomer. Binds 30S ribosomal subunits, but not 50S ribosomal subunits or 70S ribosomes.

It localises to the cytoplasm. One of several proteins that assist in the late maturation steps of the functional core of the 30S ribosomal subunit. Associates with free 30S ribosomal subunits (but not with 30S subunits that are part of 70S ribosomes or polysomes). Required for efficient processing of 16S rRNA. May interact with the 5'-terminal helix region of 16S rRNA. The polypeptide is Ribosome-binding factor A (Clostridium perfringens (strain 13 / Type A)).